The primary structure comprises 406 residues: Protein translocase subunit SecD (406 aa).

A run of 6 helical transmembrane segments spans residues 8-28 (IVIL…NPIN), 240-260 (MAAM…YRVA), 262-282 (FVAD…MCAI), 289-309 (PGIA…VIIF), 334-354 (FPAI…LFFF), and 361-381 (GFAV…IFIT).

The protein belongs to the SecD/SecF family. SecD subfamily. In terms of assembly, forms a complex with SecF. Part of the essential Sec protein translocation apparatus which comprises SecA, SecYEG and auxiliary proteins SecDF. Other proteins may also be involved.

It is found in the cell inner membrane. Part of the Sec protein translocase complex. Interacts with the SecYEG preprotein conducting channel. SecDF uses the proton motive force (PMF) to complete protein translocation after the ATP-dependent function of SecA. The chain is Protein translocase subunit SecD from Sebaldella termitidis (strain ATCC 33386 / NCTC 11300).